An 837-amino-acid chain; its full sequence is MEAEGVAVAAAAAAAAAAATIIASDDCDSRPGQELLVAWNTVSTGLVPPAALGLASSRTSGAVPPKEEELRAAVEVLRGHGLHSVLEEWFVEVLQNDLQGNIATEFWNAIALRENSVDEPQCLGLLLDAFGLLESRLDPYLHSLELLEKWTRLGLLMGAGAQGLREKVHTMLRGVLFFSTPRTFQEMVQRLYGRFLRVYMQSKRKGEGGTDPELEGELDSRYARRRYYRLLQSPLCAGCGSDKQQCWCRQALEQFNQLSQVLHRLSLLERVCAEAVTTTLHQVTRERMEDRCRGEYERSFLREFHKWIERVVGWLGKVFLQDNPTRPTSPEAGNTLRRWRCHVQRFFYRIYATLRIEELFSIIRDFPDSRPAIEDLKYCLERTDQRQQLLVSLKVALETRLLHPGVNTCDIITLYISAIKALRVLDPSMVILEVACEPIRRYLRTREDTVRQIVAGLTGDSDGTGDLAVELSKTDPACLETGQDSEDDSGEPEDWVPDPVDADPVKSSSKRRSSDIISLLVSIYGSKDLFINEYRSLLADRLLHQFSFSPEREIRNVELLKLRFGEAPMHFCEVMLKDMADSRRINANIREEDEKRPVEEQPPFGVYAVILSSEFWPPFKDEKLEVPEDIRAALDVYCKKYEKLKAMRTLSWKHTLGLVTMDVELADRTLSVAVTPVQAVVLLYFQNQASWTLEELSKVVKMPVALLRRRMSVWLQQGVLREEPPGTFSVIEEERPQDRDNMVLIDSDDESDSGMASQADQKEEELLLFWAYIQAMLTNLESLSLERIYSMLRMFVMTGPALAEIDLQELQGYLQKKVRDQQLIYSAGVYRLPKNSN.

Residues serine 233, serine 329, serine 485, serine 549, and serine 712 each carry the phosphoserine modification. Residues 478–508 (CLETGQDSEDDSGEPEDWVPDPVDADPVKSS) are disordered. A compositionally biased stretch (acidic residues) spans 483–496 (QDSEDDSGEPEDWV). Tyrosine 825 bears the Phosphotyrosine mark.

This sequence belongs to the cullin family. In terms of assembly, the mammalian APC/C is composed at least of 14 distinct subunits ANAPC1, ANAPC2, CDC27/APC3, ANAPC4, ANAPC5, CDC16/APC6, ANAPC7, CDC23/APC8, ANAPC10, ANAPC11, CDC26/APC12, ANAPC13, ANAPC15 and ANAPC16 that assemble into a complex of at least 19 chains with a combined molecular mass of around 1.2 MDa; APC/C interacts with FZR1 and FBXO5. In the context of the APC/C complex, directly interacts with UBE2C and UBE2S. Interacts (via cullin domain) with ANAPC11 and with UBCH10. Interacts with NEUROD2. Interacts with FBXO43; the interaction is direct.

It functions in the pathway protein modification; protein ubiquitination. Together with the RING-H2 protein ANAPC11, constitutes the catalytic component of the anaphase promoting complex/cyclosome (APC/C), a cell cycle-regulated E3 ubiquitin ligase that controls progression through mitosis and the G1 phase of the cell cycle. The APC/C complex acts by mediating ubiquitination and subsequent degradation of target proteins: it mainly mediates the formation of 'Lys-11'-linked polyubiquitin chains and, to a lower extent, the formation of 'Lys-48'- and 'Lys-63'-linked polyubiquitin chains. The APC/C complex catalyzes assembly of branched 'Lys-11'-/'Lys-48'-linked branched ubiquitin chains on target proteins. The CDC20-APC/C complex positively regulates the formation of synaptic vesicle clustering at active zone to the presynaptic membrane in postmitotic neurons. CDC20-APC/C-induced degradation of NEUROD2 drives presynaptic differentiation. The chain is Anaphase-promoting complex subunit 2 (Anapc2) from Mus musculus (Mouse).